A 280-amino-acid chain; its full sequence is Nucleotide-binding protein CV_3336 (280 aa).

Residue 8 to 15 (GLSGSGKS) participates in ATP binding. 57-60 (DTRS) lines the GTP pocket.

It belongs to the RapZ-like family.

Its function is as follows. Displays ATPase and GTPase activities. This is Nucleotide-binding protein CV_3336 from Chromobacterium violaceum (strain ATCC 12472 / DSM 30191 / JCM 1249 / CCUG 213 / NBRC 12614 / NCIMB 9131 / NCTC 9757 / MK).